Here is a 208-residue protein sequence, read N- to C-terminus: Ribosomal RNA small subunit methyltransferase G (208 aa).

Residues Gly-73, Leu-78, 127-128 (VE), and Arg-141 contribute to the S-adenosyl-L-methionine site.

The protein belongs to the methyltransferase superfamily. RNA methyltransferase RsmG family.

The protein localises to the cytoplasm. It carries out the reaction guanosine(527) in 16S rRNA + S-adenosyl-L-methionine = N(7)-methylguanosine(527) in 16S rRNA + S-adenosyl-L-homocysteine. In terms of biological role, specifically methylates the N7 position of guanine in position 527 of 16S rRNA. This chain is Ribosomal RNA small subunit methyltransferase G, found in Cereibacter sphaeroides (strain ATCC 17025 / ATH 2.4.3) (Rhodobacter sphaeroides).